The sequence spans 127 residues: PanD regulatory factor (127 aa).

Positions 1–127 (MKLTIIRLEK…TAQQGGWEKC (127 aa)) constitute an N-acetyltransferase domain. 2 interaction with PanD regions span residues 43–48 (RFNERL) and 66–76 (LRVREVTRRRG). Residues 66-68 (LRV) and 72-79 (TRRRGVGQ) each bind CoA.

This sequence belongs to the PanZ/PanM family. Interacts with PanD in the presence of CoA. Forms a heterooctameric complex composed of four PanD subunits and four PanZ subunits. Monomer in solution.

Its activity is regulated as follows. Activation of PanD processing occurs even at low CoA concentrations. In contrast, full inhibition of PanD catalytic activity only occurs at sufficiently high CoA concentrations. In terms of biological role, controls both the activation and catalytic activity of PanD in a coenzyme A (CoA)-dependent fashion. Binding of CoA or a derivative to PanZ leads to interaction with PanD, which promotes the processing and activation of pro-PanD, and subsequent substrate-mediated inhibition of the active form of PanD. Inhibition of PanD activity is probably the primary metabolic role of PanZ, allowing negative feedback regulation of pantothenate biosynthesis by CoA. The protein is PanD regulatory factor of Escherichia coli (strain K12).